The sequence spans 258 residues: Hydroxyacylglutathione hydrolase cytoplasmic (258 aa).

Residues histidine 54 and histidine 56 each coordinate Zn(2+). Aspartate 58 and histidine 59 together coordinate Fe cation. Positions 112 and 135 each coordinate Zn(2+). Aspartate 135 provides a ligand contact to Fe cation. Residues lysine 144–phenylalanine 146 and histidine 174–tyrosine 176 contribute to the substrate site. A Fe cation-binding site is contributed by histidine 174.

Belongs to the metallo-beta-lactamase superfamily. Glyoxalase II family. As to quaternary structure, homodimer. Requires Fe(2+) as cofactor. Zn(2+) is required as a cofactor. Fe(3+) serves as cofactor. As to expression, mainly expressed in flowers and flower buds. Also detected in roots and leaves.

The protein localises to the cytoplasm. The catalysed reaction is an S-(2-hydroxyacyl)glutathione + H2O = a 2-hydroxy carboxylate + glutathione + H(+). It functions in the pathway secondary metabolite metabolism; methylglyoxal degradation; (R)-lactate from methylglyoxal: step 2/2. Thiolesterase that catalyzes the hydrolysis of S-D-lactoyl-glutathione to form glutathione and D-lactic acid. The sequence is that of Hydroxyacylglutathione hydrolase cytoplasmic (GLX2-2) from Arabidopsis thaliana (Mouse-ear cress).